The sequence spans 344 residues: Tripartite motif-containing protein 44 (344 aa).

Disordered stretches follow at residues 1-25 and 68-165; these read MASG…EPDE and TPPA…EFDP. Residues 75–92 are compositionally biased toward basic and acidic residues; the sequence is GAGKEEAEVKVEQEREIE. Residues 93-165 are compositionally biased toward acidic residues; the sequence is SEAGEESESE…ETEAESEFDP (73 aa). The B box-type zinc-finger motif lies at 174–215; sequence VAKRKCPDHGLDLSTYCQEDRQLICVLCPVIGAHQGHQLSTL. Zn(2+) contacts are provided by C179, H182, C201, and H207. Positions 290–325 form a coiled coil; sequence AHVTEILADIQSHMDRLMTQMAQAKEQLDTSNESAE. The interval 309 to 344 is disordered; sequence QMAQAKEQLDTSNESAEPKAEGDEEGPSGASEEEDT. Acidic residues predominate over residues 330–344; the sequence is GDEEGPSGASEEEDT. A phosphoserine mark is found at S336 and S339.

As to quaternary structure, interacts (via coiled coil) with TRIM17 (via coiled coil).

Its function is as follows. May play a role in the process of differentiation and maturation of neuronal cells. May regulate the activity of TRIM17. Is a negative regulator of PAX6 expression. The protein is Tripartite motif-containing protein 44 (TRIM44) of Pongo abelii (Sumatran orangutan).